A 473-amino-acid chain; its full sequence is Sulfhydrylase-like protein lolC1 (473 aa).

Lysine 226 carries the N6-(pyridoxal phosphate)lysine modification.

Belongs to the trans-sulfuration enzymes family. It depends on pyridoxal 5'-phosphate as a cofactor.

It participates in alkaloid biosynthesis. Functionally, sulfhydrylase-like protein; part of the gene cluster that mediates the biosynthesis of loline alkaloids, potent insecticidal agents composed of a pyrrolizidine ring system and an uncommon ether bridge linking carbons 2 and 7. Lolines are structurally differentiated by the various modifications of the L-amino group and include norloline, loline, N-methylloline, N-acetylloline, N-acetylnorloline, and N-formylloline. The first committed step is the condensation of O-acetyl-L-homoserine (derived from L-aspartic acid) and L-proline, probably catalyzed by the gamma-type pyridoxal 5'-phosphate(PLP)-dependent enzyme lolC, to give the diamino diacid, NACPP. Ensuing cyclization, decarboxylation, and acetylation steps yield 1-exo-acetamidopyrrolizidine (AcAP). LolO is required for installation of the ether bridge upon the pathway intermediate, 1-exo-acetamidopyrrolizidine (AcAP). In sequential 2-oxoglutarate- and O(2)-consuming steps, lolO removes hydrogens from C2 and C7 of AcAP to form both carbon-oxygen bonds in N-acetylnorloline (NANL), the precursor to all other lolines. The enzymes lolD, lolE, lolF and lolT have also been proposed to be involved in the ether-bridge installation. Further processing of the exocyclic moiety of NANL by fungal N-acetamidase (LolN), methyltransferase (LolM), and cytochrome P450 (LolP) enzymes, with occasional involvement of a plant acetyltransferase, generates the other known lolines. LolN transforms NANL to norlonine which is monomethylated and dimethylated to respectively lonine and N-methyllonine (NML) by lolM. LolP catalyzes hydroxylation of the methyl group in N-methylloline (NML) and further oxygenation to N-formylloline (NFL). A plant acetyltransferase is responsible for the acetylation of loline to form N-acetylloline (NAL). LolA might interact with aspartate kinase to prevent feedback inhibition of its activity by these end products and thereby promote production of L-homoserine from L-aspartate. The polypeptide is Sulfhydrylase-like protein lolC1 (Epichloe uncinata (Endophyte fungus)).